The chain runs to 350 residues: Quinone oxidoreductase-like protein 2 (350 aa).

At lysine 36 the chain carries N6-acetyllysine. Lysine 201 bears the N6-succinyllysine mark. Lysine 302 and lysine 328 each carry N6-acetyllysine.

This sequence belongs to the zinc-containing alcohol dehydrogenase family. Quinone oxidoreductase subfamily.

The protein is Quinone oxidoreductase-like protein 2 of Rattus norvegicus (Rat).